Reading from the N-terminus, the 708-residue chain is GID complex associated protein 12 (708 aa).

Positions 381-396 (SSRRNSSFSTASSEPR) are enriched in low complexity. The interval 381–403 (SSRRNSSFSTASSEPRPLSRRRR) is disordered.

In terms of assembly, interacts with core components of the GID/CTLH ubiquitin ligase complex. GID12 binds both the substrate receptor GID4 and the tip of GID5 in the scaffolding module, sealing GID4 onto the scaffold.

Regulator of the GID E3 ligase complex. Modulates both assembly of the substrate receptor GID4 into the GID E3 ligase complex and its activity toward its substrates. GID12-binding remodels the N-degron binding pocket in the GID(SR4) complex, and could limit substrate accessibility of a bulky substrate to a ubiquitynation active site, thereby stabilizing gluconeogenic enzyme substrates. Involved in actin patch formation. The polypeptide is GID complex associated protein 12 (Saccharomyces cerevisiae (strain ATCC 204508 / S288c) (Baker's yeast)).